A 286-amino-acid polypeptide reads, in one-letter code: Protoheme IX farnesyltransferase (286 aa).

Helical transmembrane passes span 14–31 (FRLT…YILA), 38–58 (WLNL…ANII), 94–114 (LFLI…ALIL), 135–155 (IAVF…WIAV), 165–185 (VLFA…AWVL), 207–227 (TATI…LPYL), 228–248 (FGMS…LFFF), and 262–282 (ALLL…AFVL).

The protein belongs to the UbiA prenyltransferase family. Protoheme IX farnesyltransferase subfamily.

It is found in the cell inner membrane. It catalyses the reaction heme b + (2E,6E)-farnesyl diphosphate + H2O = Fe(II)-heme o + diphosphate. It functions in the pathway porphyrin-containing compound metabolism; heme O biosynthesis; heme O from protoheme: step 1/1. Its function is as follows. Converts heme B (protoheme IX) to heme O by substitution of the vinyl group on carbon 2 of heme B porphyrin ring with a hydroxyethyl farnesyl side group. In Cytophaga hutchinsonii (strain ATCC 33406 / DSM 1761 / CIP 103989 / NBRC 15051 / NCIMB 9469 / D465), this protein is Protoheme IX farnesyltransferase.